The primary structure comprises 226 residues: Elongation factor G (226 aa).

It belongs to the GTP-binding elongation factor family. EF-G/EF-2 subfamily.

The protein localises to the cytoplasm. In terms of biological role, catalyzes the GTP-dependent ribosomal translocation step during translation elongation. During this step, the ribosome changes from the pre-translocational (PRE) to the post-translocational (POST) state as the newly formed A-site-bound peptidyl-tRNA and P-site-bound deacylated tRNA move to the P and E sites, respectively. Catalyzes the coordinated movement of the two tRNA molecules, the mRNA and conformational changes in the ribosome. The polypeptide is Elongation factor G (fusA) (Neisseria gonorrhoeae).